The following is an 80-amino-acid chain: Ubiquitin-like protein NEDD8-like protein 2 (80 aa).

The protein belongs to the ubiquitin family.

The chain is Ubiquitin-like protein NEDD8-like protein 2 (nedd8l2) from Dictyostelium discoideum (Social amoeba).